A 1323-amino-acid chain; its full sequence is Tetratricopeptide repeat protein 21 homolog (1323 aa).

TPR repeat units follow at residues 56–89 (VPLA…QNFS), 411–444 (ESPF…LIEM), 580–613 (SLYH…PKKE), 667–700 (HQLV…QSNF), 702–735 (LSRI…EPTP), 736–768 (GSYS…QSKD), 770–802 (QLAE…YKDK), 804–835 (MRLK…EPEP), 845–878 (IQFL…HNKI), 892–925 (ARIC…YETD), 927–959 (KSNL…DPHN), 961–993 (EANL…NPLH), 995–1027 (HALF…NPRC), 1031–1064 (AGYS…PNVV), 1203–1236 (EKCW…NCNS), 1238–1270 (RAFE…TNQK), and 1272–1305 (CSFG…NPQY).

Belongs to the TTC21 family.

This Caenorhabditis briggsae protein is Tetratricopeptide repeat protein 21 homolog.